The chain runs to 793 residues: Xaa-Pro dipeptidyl-peptidase (793 aa).

Residues serine 363, aspartate 483, and histidine 514 each act as charge relay system in the active site.

It belongs to the peptidase S15 family. In terms of assembly, homodimer.

It localises to the cytoplasm. It carries out the reaction Hydrolyzes Xaa-Pro-|- bonds to release unblocked, N-terminal dipeptides from substrates including Ala-Pro-|-p-nitroanilide and (sequentially) Tyr-Pro-|-Phe-Pro-|-Gly-Pro-|-Ile.. Its function is as follows. Removes N-terminal dipeptides sequentially from polypeptides having unsubstituted N-termini provided that the penultimate residue is proline. In Lactobacillus helveticus (strain DPC 4571), this protein is Xaa-Pro dipeptidyl-peptidase.